A 158-amino-acid chain; its full sequence is Transcription elongation factor GreA (158 aa).

It belongs to the GreA/GreB family.

Its function is as follows. Necessary for efficient RNA polymerase transcription elongation past template-encoded arresting sites. The arresting sites in DNA have the property of trapping a certain fraction of elongating RNA polymerases that pass through, resulting in locked ternary complexes. Cleavage of the nascent transcript by cleavage factors such as GreA or GreB allows the resumption of elongation from the new 3'terminus. GreA releases sequences of 2 to 3 nucleotides. This is Transcription elongation factor GreA from Polaromonas naphthalenivorans (strain CJ2).